We begin with the raw amino-acid sequence, 419 residues long: Histidine--tRNA ligase (419 aa).

This sequence belongs to the class-II aminoacyl-tRNA synthetase family. In terms of assembly, homodimer.

The protein localises to the cytoplasm. It catalyses the reaction tRNA(His) + L-histidine + ATP = L-histidyl-tRNA(His) + AMP + diphosphate + H(+). In Desulfatibacillum aliphaticivorans, this protein is Histidine--tRNA ligase.